The following is a 362-amino-acid chain: Serine/threonine-protein kinase SRK2D (362 aa).

A Protein kinase domain is found at 23–279 (YDFVKDIGSG…IPEITSDKWF (257 aa)). Residues 29–37 (IGSGNFGVA) and Lys-52 each bind ATP. Asp-142 functions as the Proton acceptor in the catalytic mechanism.

It belongs to the protein kinase superfamily. Ser/Thr protein kinase family. Interacts with ABI1. Interacts with I-2, TOPP1 and TOPP2. Interacts with FREE1 (via C-terminus). As to expression, expressed in seeds, seedlings, roots (especially in tips), stems, leaves, shoots, flowers and siliques.

It catalyses the reaction L-seryl-[protein] + ATP = O-phospho-L-seryl-[protein] + ADP + H(+). It carries out the reaction L-threonyl-[protein] + ATP = O-phospho-L-threonyl-[protein] + ADP + H(+). In terms of biological role, together with SRK2I, key component and activator of the abscisic acid (ABA) signaling pathway that regulates numerous ABA responses, such as seed germination, Pro accumulation, root growth inhibition, dormancy and seedling growth, and, to a lesser extent, stomatal closure. In response to ABA, phosphorylates the ESCRT-I complex component FREE1, which is required for ABA-induced FREE1 nuclear import. The chain is Serine/threonine-protein kinase SRK2D (SRK2D) from Arabidopsis thaliana (Mouse-ear cress).